Consider the following 620-residue polypeptide: Chaperone protein HscA homolog (620 aa).

Belongs to the heat shock protein 70 family.

Functionally, chaperone involved in the maturation of iron-sulfur cluster-containing proteins. Has a low intrinsic ATPase activity which is markedly stimulated by HscB. This is Chaperone protein HscA homolog from Shewanella sp. (strain ANA-3).